We begin with the raw amino-acid sequence, 710 residues long: Polyribonucleotide nucleotidyltransferase (710 aa).

Positions 487 and 493 each coordinate Mg(2+). Positions 554–613 constitute a KH domain; it reads PRIEVMNIPVDKIREVIGSGGKVIREIVEKTGAKINIEDDGTVKIASSSGKEIEAARKWI. Residues 623-691 enclose the S1 motif domain; that stretch reads GQIYEGTVVK…ERGKVRLSMK (69 aa).

This sequence belongs to the polyribonucleotide nucleotidyltransferase family. Mg(2+) is required as a cofactor.

It localises to the cytoplasm. It carries out the reaction RNA(n+1) + phosphate = RNA(n) + a ribonucleoside 5'-diphosphate. Involved in mRNA degradation. Catalyzes the phosphorolysis of single-stranded polyribonucleotides processively in the 3'- to 5'-direction. This Rhizobium rhizogenes (strain K84 / ATCC BAA-868) (Agrobacterium radiobacter) protein is Polyribonucleotide nucleotidyltransferase.